We begin with the raw amino-acid sequence, 246 residues long: Proteasome subunit alpha (246 aa).

This sequence belongs to the peptidase T1A family. As to quaternary structure, the 20S proteasome core is composed of 14 alpha and 14 beta subunits that assemble into four stacked heptameric rings, resulting in a barrel-shaped structure. The two inner rings, each composed of seven catalytic beta subunits, are sandwiched by two outer rings, each composed of seven alpha subunits. The catalytic chamber with the active sites is on the inside of the barrel. Has a gated structure, the ends of the cylinder being occluded by the N-termini of the alpha-subunits. Is capped by the proteasome-associated ATPase, ARC. Can also interact with the bacterial proteasome activator Bpa through the C-terminal hydrophobic-tyrosine-X motif (HbYX motif) of Bpa; Bpa forms a homooligomeric ring-like structure which stacks co-axially with the proteasomal alpha-rings. Pupylated at an undetermined lysine residue by the prokaryotic ubiquitin-like protein Pup with the help of the ligase PafA, which leads to its degradation by the proteasome and thereby constitutes a negative auto-regulation.

Its subcellular location is the cytoplasm. It functions in the pathway protein degradation; proteasomal Pup-dependent pathway. Its activity is regulated as follows. The formation of the proteasomal ATPase ARC-20S proteasome complex, likely via the docking of the C-termini of ARC into the intersubunit pockets in the alpha-rings, may trigger opening of the gate for substrate entry. Interconversion between the open-gate and close-gate conformations leads to a dynamic regulation of the 20S proteasome proteolysis activity. PPS auto-regulates its own activity via pupylation and degradation of its components. Peptidolytic activity is inhibited by N-acetyl-Leu-Leu-norleucinal (Ac-LLnL) in vitro. Component of the proteasome core, a large protease complex with broad specificity involved in protein degradation. The M.smegmatis proteasome is able to cleave oligopeptides after hydrophobic residues, thus displaying chymotrypsin-like activity. In complex with the ATPase Mpa, degrades protein targets conjugated to a prokaryotic ubiquitin-like protein (Pup). Identified substrates of the M.smegmatis proteasome are the pupylated SodA and Ino1 proteins. The Pup-proteasome system (PPS) is essential for survival under starvation; PPS likely functions to recycle amino acids under nitrogen starvation, thereby enabling the cell to maintain basal metabolic activities. This chain is Proteasome subunit alpha, found in Mycolicibacterium smegmatis (strain ATCC 700084 / mc(2)155) (Mycobacterium smegmatis).